Consider the following 136-residue polypeptide: Membrane-bound negative regulator YvrL (136 aa).

The next 4 helical transmembrane spans lie at 18–38 (LLAA…LFSL), 46–66 (AAHV…FEPF), 83–103 (LFIL…AHTT), and 106–126 (LISD…VFLI).

The protein resides in the cell membrane. In terms of biological role, negatively regulates RNA polymerase sigma factor SigO-dependent transcription. Prevents the expression or secretion of OxdC under nonstress conditions. May act as an anti-sigma factor. This chain is Membrane-bound negative regulator YvrL (yvrL), found in Bacillus subtilis (strain 168).